The following is a 153-amino-acid chain: MKCPFCNHLHDKVVDSRESKEGDAIRRRRECLECTRRYTTYERIDEVPYMVVKKDGRREKFDRQKVLGGLLKACEKRPVSMAKLSELVNRVEYKVSDSPDREISTIDIGEYLMENLRELDKIAYVRFASVYRDFQDEQAFFNELKHLMRQKMS.

A zinc finger lies at 3 to 34; that stretch reads CPFCNHLHDKVVDSRESKEGDAIRRRRECLEC. Positions 49–139 constitute an ATP-cone domain; it reads YMVVKKDGRR…VYRDFQDEQA (91 aa).

Belongs to the NrdR family. Requires Zn(2+) as cofactor.

Functionally, negatively regulates transcription of bacterial ribonucleotide reductase nrd genes and operons by binding to NrdR-boxes. In Solibacter usitatus (strain Ellin6076), this protein is Transcriptional repressor NrdR.